A 504-amino-acid chain; its full sequence is UDP-N-acetylmuramoylalanine--D-glutamate ligase (504 aa).

132–138 (GTNGKTT) is a binding site for ATP. Positions 284-310 (AQDRDATDEPAPTRRRKSESTAPPDIG) are disordered.

The protein belongs to the MurCDEF family.

Its subcellular location is the cytoplasm. It carries out the reaction UDP-N-acetyl-alpha-D-muramoyl-L-alanine + D-glutamate + ATP = UDP-N-acetyl-alpha-D-muramoyl-L-alanyl-D-glutamate + ADP + phosphate + H(+). It functions in the pathway cell wall biogenesis; peptidoglycan biosynthesis. Its function is as follows. Cell wall formation. Catalyzes the addition of glutamate to the nucleotide precursor UDP-N-acetylmuramoyl-L-alanine (UMA). In Paraburkholderia phymatum (strain DSM 17167 / CIP 108236 / LMG 21445 / STM815) (Burkholderia phymatum), this protein is UDP-N-acetylmuramoylalanine--D-glutamate ligase.